A 91-amino-acid chain; its full sequence is MGAMSPWHWAIVALVVIILFGSKKLPDAARGLGRSLRIFKSEVKEMQNDNSTPAPTAQQSAPAELPVADTTTAPVTPPAPVQPQHTEPKSA.

The helical transmembrane segment at 1–21 threads the bilayer; that stretch reads MGAMSPWHWAIVALVVIILFG. The disordered stretch occupies residues 44-91; it reads KEMQNDNSTPAPTAQQSAPAELPVADTTTAPVTPPAPVQPQHTEPKSA. Residues 51-74 show a composition bias toward low complexity; it reads STPAPTAQQSAPAELPVADTTTAP.

Belongs to the TatA/E family. As to quaternary structure, the Tat system comprises two distinct complexes: a TatABC complex, containing multiple copies of TatA, TatB and TatC subunits, and a separate TatA complex, containing only TatA subunits. Substrates initially bind to the TatABC complex, which probably triggers association of the separate TatA complex to form the active translocon.

The protein resides in the cell membrane. In terms of biological role, part of the twin-arginine translocation (Tat) system that transports large folded proteins containing a characteristic twin-arginine motif in their signal peptide across membranes. TatA could form the protein-conducting channel of the Tat system. This chain is Sec-independent protein translocase protein TatA, found in Rhodococcus jostii (strain RHA1).